Here is a 909-residue protein sequence, read N- to C-terminus: Lon protease homolog 2, peroxisomal (909 aa).

Residues 1–230 (MAPVRAPTAR…KVIELLDRQV (230 aa)) form the Lon N-terminal domain. Positions 249-269 (FPMDPDSTKPGKVKPPVKAPG) are disordered. 463–470 (GPPGVGKT) provides a ligand contact to ATP. Positions 706-893 (TSRPGIVTGL…WEAIRYVWPD (188 aa)) constitute a Lon proteolytic domain. Catalysis depends on residues Ser799 and Lys842. A Microbody targeting signal motif is present at residues 907-909 (SRL).

The protein belongs to the peptidase S16 family.

The protein localises to the peroxisome matrix. Its subcellular location is the cytoplasm. The catalysed reaction is Hydrolysis of proteins in presence of ATP.. Functionally, ATP-dependent serine protease that mediates the selective degradation of misfolded and unassembled polypeptides in the peroxisomal matrix. Necessary for type 2 peroxisome targeting signal (PTS2)-containing protein processing and facilitates peroxisome matrix protein import. The sequence is that of Lon protease homolog 2, peroxisomal from Sordaria macrospora (strain ATCC MYA-333 / DSM 997 / K(L3346) / K-hell).